Reading from the N-terminus, the 239-residue chain is Large ribosomal subunit protein uL2 (239 aa).

Residues 205–224 form a disordered region; sequence GGHQHCGRPKTVARGTSPGR.

The protein belongs to the universal ribosomal protein uL2 family. As to quaternary structure, part of the 50S ribosomal subunit. Forms a bridge to the 30S subunit in the 70S ribosome.

One of the primary rRNA binding proteins. Required for association of the 30S and 50S subunits to form the 70S ribosome, for tRNA binding and peptide bond formation. It has been suggested to have peptidyltransferase activity; this is somewhat controversial. Makes several contacts with the 16S rRNA in the 70S ribosome. The polypeptide is Large ribosomal subunit protein uL2 (Methanoculleus marisnigri (strain ATCC 35101 / DSM 1498 / JR1)).